We begin with the raw amino-acid sequence, 245 residues long: MSQSTSVFRRNGFTFKQFFVAHDRCAMKAGTDGILLGAWAPVAGVKRCLDIGAGSGLLALMLAQRTDDSVMIDAVELESEAAAQAQENINQSPWAERINVHTADILQWITQQTVRFDLIISNPPYYQQGVECATPQREQARYTTTLDHPSLLTCAAECITEEGFFCVVLPEQIGNGFTELALSMGWHLRLRTDVAENEARLPHRVLLAFSPQAGECFSDRLVIRGPDQNYSEAYTALTQAFYLFM.

This sequence belongs to the methyltransferase superfamily. tRNA (adenine-N(6)-)-methyltransferase family.

It is found in the cytoplasm. The enzyme catalyses adenosine(37) in tRNA1(Val) + S-adenosyl-L-methionine = N(6)-methyladenosine(37) in tRNA1(Val) + S-adenosyl-L-homocysteine + H(+). Functionally, specifically methylates the adenine in position 37 of tRNA(1)(Val) (anticodon cmo5UAC). This Escherichia coli O6:K15:H31 (strain 536 / UPEC) protein is tRNA1(Val) (adenine(37)-N6)-methyltransferase.